The primary structure comprises 84 residues: MQHDLHPEYSEVTIQLADGSEITTRSTMETDSYETEVDSTNHPFYTGRRQFVDTAGRVEKFNRRYGLTDDDEGDDEETEDAADE.

Disordered regions lie at residues 1-41 (MQHD…DSTN) and 63-84 (RRYG…AADE). Polar residues predominate over residues 21–30 (EITTRSTMET). A compositionally biased stretch (acidic residues) spans 68 to 84 (TDDDEGDDEETEDAADE).

Belongs to the bacterial ribosomal protein bL31 family. Type A subfamily. Part of the 50S ribosomal subunit.

Its function is as follows. Binds the 23S rRNA. The protein is Large ribosomal subunit protein bL31 of Salinibacter ruber (strain DSM 13855 / M31).